The primary structure comprises 219 residues: MTIHAAVIQKLLNTGAHLGRRAAEHHFKQYAYGTRNGMTIIDSDKTLICLRSAAHFVANLAHMRGNIFFVNTNPLFDEIIELTSRRIQGDSYNHNRAMNLWKMGGFLTNSYSPKKFRSRHKKLCFGPTTMPDCVVVFDSERKSSVILEASKLQIPVVAIVDPNVPLEFFEKITYPVPARDSVKFVYLFCNVITKCFVAEQMKLGIKEGSNEDLMKDLAA.

Belongs to the universal ribosomal protein uS2 family. In terms of assembly, component of the mitochondrial ribosome small subunit.

The protein localises to the mitochondrion. The protein is Small ribosomal subunit protein uS2m (RPS2) of Arabidopsis thaliana (Mouse-ear cress).